The sequence spans 166 residues: Short form salivary protein D7R1 (166 aa).

An N-terminal signal peptide occupies residues 1 to 21 (MFRKVFSVALVTCGLLVIVQA).

This sequence belongs to the PBP/GOBP family. Interacts with host coagulation factor XII (F12) (inactive and activated) (via amino acids 1-77). Interacts with host high molecular weight kininogen (KNG1) (via amino acids 402-532). Female salivary gland (at protein level).

Its subcellular location is the secreted. With respect to regulation, zn(2+) modulates binding to host coagulation factor XII (F12) and high molecular weight kininogen (KNG1). In terms of biological role, salivary protein with anticoagulant activity that targets the intrinsic blood coagulation pathway in the host. Inhibits activation of the host plasma contact system by preventing the reciprocal activation of host coagulation factor XII (F12) and prekallikrein (KLKB1). Attenuates generation of bradykinin in host plasma. May bind and sequester different mediators involved in the host response, such as serotonin and histamine. This Anopheles stephensi (Indo-Pakistan malaria mosquito) protein is Short form salivary protein D7R1.